Here is a 125-residue protein sequence, read N- to C-terminus: Cytochrome c-556 (125 aa).

Residues M13, C113, C116, and H117 each contribute to the heme site. The heme c site is built by M13, C113, C116, and H117.

In terms of assembly, monomer. Binds 1 heme c group covalently per subunit.

Its function is as follows. Low-spin monoheme cytochrome c. This chain is Cytochrome c-556, found in Agrobacterium tumefaciens (strain apple 185).